A 554-amino-acid polypeptide reads, in one-letter code: MSQPRAEHVTKFVFVTGGVASSLGKGLTASSLGQLLTARGLKVTMQKLDPYLNVDPGTMNPFQHGEVFVTDDGAETDLDLGHYERFLNRNLSGNANVTTGQVYSEVIAKERRGEYLGDTVQVIPHITDEIKHRILTMDRPDENGVRPDIVITEIGGTVGDIESQPFLEAARQTRHDVGRENIFFIHVSLVPYLAPSGELKTKPTQHSVAALRSIGIVPDALVLRCDREVPEPLKAKIALMCDVDQEGVISCADADSIYEIPKVLHREHLDAFLIRRLDLPFRDVDWEEWDSLLRKVHEPEHELTVALVGKYIDLPDAYLSVTEAIRAGGFANNARARVKWVPSDLCQTEEGAEKELGNVDAIVVPGGFGIRGIEGKIGAVRYARTHRVPFLGLCLGLQCMVIEAARAAGITDASSTEFDPQTTEPVVSTMAEQMAAVSGEADLGGTMRLGAYPAVLDKGSVVAEAYQTLEVSERHRHRYEINNAYRQRITDGVGLKFSGTSPDGKLVEFIEYPDHPYMVATQAHPEYKSRPTKAHPLFTALVKAGLKHKNDEEK.

The segment at 1 to 279 is amidoligase domain; the sequence is MSQPRAEHVT…DAFLIRRLDL (279 aa). CTP is bound at residue S21. S21 contributes to the UTP binding site. Residues 22-27 and D79 each bind ATP; that span reads SLGKGL. Residues D79 and E153 each contribute to the Mg(2+) site. CTP-binding positions include 160-162, 200-205, and K236; these read DIE and KTKPTQ. Residues 200–205 and K236 contribute to the UTP site; that span reads KTKPTQ. One can recognise a Glutamine amidotransferase type-1 domain in the interval 304–551; the sequence is TVALVGKYID…VKAGLKHKND (248 aa). G367 lines the L-glutamine pocket. C394 acts as the Nucleophile; for glutamine hydrolysis in catalysis. Residues 395–398, E417, and R478 contribute to the L-glutamine site; that span reads LGLQ. Active-site residues include H524 and E526.

It belongs to the CTP synthase family. Homotetramer.

It catalyses the reaction UTP + L-glutamine + ATP + H2O = CTP + L-glutamate + ADP + phosphate + 2 H(+). It carries out the reaction L-glutamine + H2O = L-glutamate + NH4(+). The catalysed reaction is UTP + NH4(+) + ATP = CTP + ADP + phosphate + 2 H(+). It functions in the pathway pyrimidine metabolism; CTP biosynthesis via de novo pathway; CTP from UDP: step 2/2. Allosterically activated by GTP, when glutamine is the substrate; GTP has no effect on the reaction when ammonia is the substrate. The allosteric effector GTP functions by stabilizing the protein conformation that binds the tetrahedral intermediate(s) formed during glutamine hydrolysis. Inhibited by the product CTP, via allosteric rather than competitive inhibition. Its function is as follows. Catalyzes the ATP-dependent amination of UTP to CTP with either L-glutamine or ammonia as the source of nitrogen. Regulates intracellular CTP levels through interactions with the four ribonucleotide triphosphates. This is CTP synthase from Corynebacterium kroppenstedtii (strain DSM 44385 / JCM 11950 / CIP 105744 / CCUG 35717).